Reading from the N-terminus, the 984-residue chain is Mineralocorticoid receptor (984 aa).

The modulating stretch occupies residues 1–602 (METKGYHSLP…STGSSRPSKI (602 aa)). The segment covering 231-243 (QGTPLTCSPNVEN) has biased composition (polar residues). Disordered regions lie at residues 231 to 329 (QGTP…AAST) and 346 to 369 (SGTS…EKGA). A phosphoserine mark is found at Ser250, Ser259, Ser283, Ser287, and Ser299. The segment covering 259 to 291 (SPLSSPLSSMKSSISSPPSHCSVKSPVSSPNNV) has biased composition (low complexity). A compositionally biased stretch (polar residues) spans 292–329 (TLRSSVSSPANINNSRCSVSSPSNTNNRSTLSSPAAST). The segment covering 346 to 355 (SGTSAGSSTS) has biased composition (low complexity). Zn(2+) is bound by residues Cys603, Cys606, Cys620, Cys623, Cys639, Cys645, Cys655, and Cys658. NR C4-type zinc fingers lie at residues 603–623 (CLVC…CGSC) and 639–663 (CAGR…LQKC). Positions 603–668 (CLVCGDEASG…RLQKCLQAGM (66 aa)) form a DNA-binding region, nuclear receptor. The tract at residues 669 to 725 (NLGARKSKKLGKLKGIHEEQPQQQQPPPPPPPPQSPEEGTTYIAPAKEPSVNTALVP) is hinge. The interval 684–710 (IHEEQPQQQQPPPPPPPPQSPEEGTTY) is disordered. Over residues 692–703 (QQPPPPPPPPQS) the composition is skewed to pro residues. Positions 726-964 (QLSTISRALT…EFPAMLVEII (239 aa)) constitute an NR LBD domain. Positions 770 and 776 each coordinate 21-hydroxyprogesterone. Aldosterone is bound by residues Asn770 and Gln776. Progesterone is bound by residues Asn770 and Gln776. Residues 782–785 (KWAK) are important for coactivator binding. 21-hydroxyprogesterone is bound by residues Arg817 and Thr945. 2 residues coordinate aldosterone: Arg817 and Thr945. The progesterone site is built by Arg817 and Thr945.

It belongs to the nuclear hormone receptor family. NR3 subfamily. In terms of assembly, heteromultimeric cytoplasmic complex with HSP90, HSP70, and FKBP4, in the absence of ligand. After ligand binding, it translocates to the nucleus and binds to DNA as a homodimer and as a heterodimer with NR3C1. Binds the coactivator NCOA2. May interact with HSD11B2 in the absence of ligand. Binds the coactivators NCOA1, TIF1 and NRIP1. In terms of processing, phosphorylated.

It localises to the cytoplasm. The protein resides in the nucleus. The protein localises to the endoplasmic reticulum membrane. Functionally, receptor for both mineralocorticoids (MC) such as aldosterone and glucocorticoids (GC) such as corticosterone or cortisol. Binds to mineralocorticoid response elements (MRE) and transactivates target genes. The effect of MC is to increase ion and water transport and thus raise extracellular fluid volume and blood pressure and lower potassium levels. The sequence is that of Mineralocorticoid receptor (NR3C2) from Aotus nancymaae (Ma's night monkey).